The sequence spans 367 residues: Phospho-N-acetylmuramoyl-pentapeptide-transferase (367 aa).

Transmembrane regions (helical) follow at residues 27–47 (VLAA…VIRW), 73–93 (TMGG…WGDL), 97–117 (YVWT…YDDW), 132–152 (WKFF…AFSA), 167–187 (TMAY…VIVG), 200–220 (GLAI…AYVT), 237–257 (AGEL…FLWF), 264–284 (VFMG…VAVI), 289–309 (IVLL…MLQV), and 344–364 (QVVV…LSTL).

Belongs to the glycosyltransferase 4 family. MraY subfamily. It depends on Mg(2+) as a cofactor.

It is found in the cell inner membrane. The enzyme catalyses UDP-N-acetyl-alpha-D-muramoyl-L-alanyl-gamma-D-glutamyl-meso-2,6-diaminopimeloyl-D-alanyl-D-alanine + di-trans,octa-cis-undecaprenyl phosphate = di-trans,octa-cis-undecaprenyl diphospho-N-acetyl-alpha-D-muramoyl-L-alanyl-D-glutamyl-meso-2,6-diaminopimeloyl-D-alanyl-D-alanine + UMP. It participates in cell wall biogenesis; peptidoglycan biosynthesis. Catalyzes the initial step of the lipid cycle reactions in the biosynthesis of the cell wall peptidoglycan: transfers peptidoglycan precursor phospho-MurNAc-pentapeptide from UDP-MurNAc-pentapeptide onto the lipid carrier undecaprenyl phosphate, yielding undecaprenyl-pyrophosphoryl-MurNAc-pentapeptide, known as lipid I. The polypeptide is Phospho-N-acetylmuramoyl-pentapeptide-transferase (Dechloromonas aromatica (strain RCB)).